We begin with the raw amino-acid sequence, 268 residues long: Lipase 1 (268 aa).

Positions 1–29 (MRRFRLVGFLSSLVLAAGAALTGAATAQA) are cleaved as a signal peptide. The active-site Nucleophile is serine 44. 3 cysteine pairs are disulfide-bonded: cysteine 61-cysteine 86, cysteine 127-cysteine 135, and cysteine 185-cysteine 231. Residue histidine 250 is part of the active site.

Belongs to the 'GDSL' lipolytic enzyme family. Monomer.

It localises to the secreted. The catalysed reaction is a triacylglycerol + H2O = a diacylglycerol + a fatty acid + H(+). Strongly inhibited by Ag(+). The cations Ca(2+), Mg(2+), Co(2+) and Cu(2+) do not significantly reduce the lipolytic activity of SCO1725. Is also inhibited by DTT in vitro, but not by EDTA or by the reagent masking SH-groups, p-hydroxymercuribenzoate (pHMB). Is resistant to PMSF inhibition, except in the presence of Ca(2+). Is also strongly inhibited by 3,4-dichloroisocoumarin (DCI), another inhibitor of serine hydrolases. Addition of tetrahydrofuran and 1,4-dioxane significantly increases (2- and 4- fold, respectively) hydrolytic activity of lipase towards p-nitrophenyl caprylate. Functionally, catalyzes the hydrolysis of fatty acid esters with a preference for mid-length acyl chain (C10-C16). Is able to hydrolyze the triacylglycerol triolein and mixed triacylglycerols from a wide range of natural oils; better activity is obtained with corn-, wheat germ- and olive oil that have higher content of linoleic and/or oleic acid (C18:2; C18:1, cis). Tween detergents are also substrates for this enzyme. Displays arylesterase activity towards p-nitrophenyl alkanoate esters and alpha- and beta-naphthyl esters. The chain is Lipase 1 from Streptomyces coelicolor (strain ATCC BAA-471 / A3(2) / M145).